Consider the following 502-residue polypeptide: Lysine--tRNA ligase (502 aa).

The Mg(2+) site is built by Glu398 and Glu405.

The protein belongs to the class-II aminoacyl-tRNA synthetase family. As to quaternary structure, homodimer. Mg(2+) serves as cofactor.

Its subcellular location is the cytoplasm. It carries out the reaction tRNA(Lys) + L-lysine + ATP = L-lysyl-tRNA(Lys) + AMP + diphosphate. This chain is Lysine--tRNA ligase (lysS), found in Thermotoga maritima (strain ATCC 43589 / DSM 3109 / JCM 10099 / NBRC 100826 / MSB8).